A 242-amino-acid chain; its full sequence is Triosephosphate isomerase (242 aa).

A substrate-binding site is contributed by 9–11 (NWK). Histidine 96 functions as the Electrophile in the catalytic mechanism. Catalysis depends on glutamate 165, which acts as the Proton acceptor. Substrate is bound by residues glycine 171, serine 204, and 225–226 (GG).

The protein belongs to the triosephosphate isomerase family. As to quaternary structure, homodimer.

It localises to the cytoplasm. It carries out the reaction D-glyceraldehyde 3-phosphate = dihydroxyacetone phosphate. It functions in the pathway carbohydrate biosynthesis; gluconeogenesis. It participates in carbohydrate degradation; glycolysis; D-glyceraldehyde 3-phosphate from glycerone phosphate: step 1/1. Functionally, involved in the gluconeogenesis. Catalyzes stereospecifically the conversion of dihydroxyacetone phosphate (DHAP) to D-glyceraldehyde-3-phosphate (G3P). The protein is Triosephosphate isomerase of Synechocystis sp. (strain ATCC 27184 / PCC 6803 / Kazusa).